Consider the following 326-residue polypeptide: Acetyl-coenzyme A carboxylase carboxyl transferase subunit alpha (326 aa).

The CoA carboxyltransferase C-terminal domain occupies 44 to 298 (QLESRAEQLR…KEALLFHLNT (255 aa)).

Belongs to the AccA family. As to quaternary structure, acetyl-CoA carboxylase is a heterohexamer composed of biotin carboxyl carrier protein (AccB), biotin carboxylase (AccC) and two subunits each of ACCase subunit alpha (AccA) and ACCase subunit beta (AccD).

It is found in the cytoplasm. The enzyme catalyses N(6)-carboxybiotinyl-L-lysyl-[protein] + acetyl-CoA = N(6)-biotinyl-L-lysyl-[protein] + malonyl-CoA. It functions in the pathway lipid metabolism; malonyl-CoA biosynthesis; malonyl-CoA from acetyl-CoA: step 1/1. Its function is as follows. Component of the acetyl coenzyme A carboxylase (ACC) complex. First, biotin carboxylase catalyzes the carboxylation of biotin on its carrier protein (BCCP) and then the CO(2) group is transferred by the carboxyltransferase to acetyl-CoA to form malonyl-CoA. In Synechocystis sp. (strain ATCC 27184 / PCC 6803 / Kazusa), this protein is Acetyl-coenzyme A carboxylase carboxyl transferase subunit alpha.